A 535-amino-acid chain; its full sequence is Glucose-6-phosphate isomerase (535 aa).

Glutamate 347 (proton donor) is an active-site residue. Residues histidine 378 and lysine 493 contribute to the active site.

This sequence belongs to the GPI family.

Its subcellular location is the cytoplasm. The catalysed reaction is alpha-D-glucose 6-phosphate = beta-D-fructose 6-phosphate. It functions in the pathway carbohydrate biosynthesis; gluconeogenesis. Its pathway is carbohydrate degradation; glycolysis; D-glyceraldehyde 3-phosphate and glycerone phosphate from D-glucose: step 2/4. Functionally, catalyzes the reversible isomerization of glucose-6-phosphate to fructose-6-phosphate. The chain is Glucose-6-phosphate isomerase from Chlamydia felis (strain Fe/C-56) (Chlamydophila felis).